The sequence spans 1608 residues: Mitogen-activated protein kinase kinase kinase 4 (1608 aa).

The segment covering 1–23 (MREAAAALVPPPAFAVTPAAAME) has biased composition (low complexity). 2 disordered regions span residues 1–136 (MREA…ENVE) and 429–478 (IPSP…RQPI). The segment covering 24 to 37 (EPPPPPPPPPPPPE) has biased composition (pro residues). Positions 66–76 (SDLEDFSDETN) are enriched in acidic residues. At Ser-84 the chain carries Phosphoserine. The span at 91–101 (QMKRMSTKHQR) shows a compositional bias: basic residues. Residue Ser-431 is modified to Phosphoserine. Residue Thr-447 is modified to Phosphothreonine. 2 positions are modified to phosphoserine: Ser-456 and Ser-457. The span at 456–466 (SSTDESEEEQI) shows a compositional bias: acidic residues. Thr-458 carries the phosphothreonine modification. 3 positions are modified to phosphoserine: Ser-461, Ser-481, and Ser-499. 3 disordered regions span residues 1157-1190 (CHSD…GSPA), 1202-1231 (ASRP…SVPE), and 1244-1274 (FRSL…TRRS). A compositionally biased stretch (polar residues) spans 1217 to 1230 (SISSAHDTRGSSVP). Ser-1252 and Ser-1274 each carry phosphoserine. A compositionally biased stretch (basic and acidic residues) spans 1252 to 1261 (SPTEERDEPA). The region spanning 1343–1601 (WQRGNKIGEG…ASQLLDHSFV (259 aa)) is the Protein kinase domain. Residues 1349–1357 (IGEGQYGKV) and Lys-1372 each bind ATP. The active-site Proton acceptor is Asp-1463.

The protein belongs to the protein kinase superfamily. STE Ser/Thr protein kinase family. MAP kinase kinase kinase subfamily. In terms of assembly, monomer and homodimer. Homodimerization enhances kinase activity. Interacts with TRAF4; this promotes homodimerization. Binds both upstream activators and downstream substrates in multimolecular complexes. Interacts with AXIN1 and DIXDC1; interaction with DIXDC1 prevents interaction with AXIN1. Interacts with GADD45 and MAP2K6. Interacts with ZFP36; this interaction enhances the association with SH3KBP1/CIN85. Interacts with SH3KBP1; this interaction enhances the association with ZFP36. Interacts with CDC42. It depends on Mg(2+) as a cofactor. Expressed at high levels in heart, placenta, skeletal muscle and pancreas, and at lower levels in other tissues.

Its subcellular location is the cytoplasm. The protein resides in the perinuclear region. It carries out the reaction L-seryl-[protein] + ATP = O-phospho-L-seryl-[protein] + ADP + H(+). The enzyme catalyses L-threonyl-[protein] + ATP = O-phospho-L-threonyl-[protein] + ADP + H(+). N-terminal autoinhibitory domain interacts with the C-terminal kinase domain, inhibiting kinase activity, and preventing interaction with its substrate, MAP2K6. The GADD45 proteins activate the kinase by binding to the N-terminal domain. Activated by phosphorylation on Thr-1505. Component of a protein kinase signal transduction cascade. Activates the CSBP2, P38 and JNK MAPK pathways, but not the ERK pathway. Specifically phosphorylates and activates MAP2K4 and MAP2K6. The chain is Mitogen-activated protein kinase kinase kinase 4 (MAP3K4) from Homo sapiens (Human).